The sequence spans 275 residues: NH(3)-dependent NAD(+) synthetase (275 aa).

46 to 53 provides a ligand contact to ATP; the sequence is GISGGQDS. D52 lines the Mg(2+) pocket. Residue R140 coordinates deamido-NAD(+). An ATP-binding site is contributed by T160. E165 is a binding site for Mg(2+). Deamido-NAD(+) is bound by residues K173 and D180. ATP contacts are provided by K189 and T211. 260–261 lines the deamido-NAD(+) pocket; it reads HK.

Belongs to the NAD synthetase family. In terms of assembly, homodimer.

The enzyme catalyses deamido-NAD(+) + NH4(+) + ATP = AMP + diphosphate + NAD(+) + H(+). The protein operates within cofactor biosynthesis; NAD(+) biosynthesis; NAD(+) from deamido-NAD(+) (ammonia route): step 1/1. In terms of biological role, catalyzes the ATP-dependent amidation of deamido-NAD to form NAD. Uses ammonia as a nitrogen source. This Escherichia coli O139:H28 (strain E24377A / ETEC) protein is NH(3)-dependent NAD(+) synthetase.